The chain runs to 28 residues: RCLHAGAACSGPIQKIPCCGTCSRRKCT.

Cystine bridges form between Cys2/Cys19, Cys9/Cys22, and Cys18/Cys27.

In terms of tissue distribution, expressed by the venom gland.

The protein localises to the secreted. Its function is as follows. Toxin that acts as an agonist on melanocortin receptors (MC1R, MC3R, MC5R, MC5R). After binding to MC1R, the peptide activates the hMC1R/Gs pathway, but after binding to MC4R, it is not able to activate or antagonize the MC4R/Gs pathway. Inhibits melanocyte stimulating hormone (MSH)-binding to human receptors (Ki=1.8 uM to MC1R, Ki=19.8 uM to MC3R, Ki=7.1 uM to MC4R, Ki=10.0 uM to MC5R). This toxin is structurally unrelated to the natural agonists. The chain is NU-theraphotoxin-Preg1a from Poecilotheria regalis (Indian ornamental tree spider).